The sequence spans 170 residues: Anaphase-promoting complex subunit SWM1 (170 aa).

Basic and acidic residues-rich tracts occupy residues 48-67 (NTRT…RNSN) and 132-141 (GANEPRKETI). Disordered regions lie at residues 48-81 (NTRT…MTSE) and 122-141 (LNGG…KETI).

Belongs to the APC13 family. The APC/C is composed of at least 13 subunits that stay tightly associated throughout the cell cycle: APC1, APC2, APC4, APC5, APC9, APC11, CDC16, CDC23, CDC26, CDC27, DOC1, MND2 and SWM1. SWM1 interacts directly with CDC23 and APC5, and is required to tether APC9, CDC16, CDC26 and CDC27 to the complex.

Its pathway is protein modification; protein ubiquitination. Its function is as follows. Component of the anaphase promoting complex/cyclosome (APC/C), a cell cycle-regulated E3 ubiquitin-protein ligase complex that controls progression through mitosis and the G1 phase of the cell cycle. The APC/C is thought to confer substrate specificity and, in the presence of ubiquitin-conjugating E2 enzymes, it catalyzes the formation of protein-ubiquitin conjugates that are subsequently degraded by the 26S proteasome. In early mitosis, the APC/C is activated by CDC20 and targets securin PDS1, the B-type cyclin CLB5, and other anaphase inhibitory proteins for proteolysis, thereby triggering the separation of sister chromatids at the metaphase-to-anaphase transition. In late mitosis and in G1, degradation of CLB5 allows activation of the APC/C by CDH1, which is needed to destroy CDC20 and the B-type cyclin CLB2 to allow exit from mitosis and creating the low CDK state necessary for cytokinesis and for reforming prereplicative complexes in G1 prior to another round of replication. SWM1 is required for APC/C activity in meiosis. The protein is Anaphase-promoting complex subunit SWM1 (SWM1) of Saccharomyces cerevisiae (strain ATCC 204508 / S288c) (Baker's yeast).